The following is a 138-amino-acid chain: Ribosomal RNA large subunit methyltransferase H (138 aa).

Residues Leu-57, Gly-86, and 105 to 110 (LSPLTF) each bind S-adenosyl-L-methionine.

Belongs to the RNA methyltransferase RlmH family. As to quaternary structure, homodimer.

The protein resides in the cytoplasm. It catalyses the reaction pseudouridine(1915) in 23S rRNA + S-adenosyl-L-methionine = N(3)-methylpseudouridine(1915) in 23S rRNA + S-adenosyl-L-homocysteine + H(+). Specifically methylates the pseudouridine at position 1915 (m3Psi1915) in 23S rRNA. The polypeptide is Ribosomal RNA large subunit methyltransferase H (Prochlorococcus marinus (strain MIT 9301)).